The chain runs to 489 residues: Beta-dihydromenaquinone-9 omega-hydroxylase (489 aa).

Residue cysteine 435 coordinates heme.

The protein belongs to the cytochrome P450 family. It depends on heme as a cofactor.

It is found in the cytoplasm. It carries out the reaction beta-dihydromenaquinone-9 + 2 reduced [2Fe-2S]-[ferredoxin] + O2 + 2 H(+) = omega-hydroxy-beta-dihydromenaquinone-9 + 2 oxidized [2Fe-2S]-[ferredoxin] + H2O. In terms of biological role, involved in the biosynthesis of sulfomenaquinone (SMK, initially named S881 on the basis of its mass), which is localized in the outer envelope of M.bovis and negatively regulates its virulence. Catalyzes the hydroxylation of beta-dihydromenaquinone-9, leading to the formation of omega-hydroxy-beta-dihydromenaquinone-9. This Mycobacterium bovis (strain ATCC BAA-935 / AF2122/97) protein is Beta-dihydromenaquinone-9 omega-hydroxylase (cyp128).